The chain runs to 332 residues: Cytoplasmic phosphatidylinositol transfer protein 1 (332 aa).

Serine 119, serine 270, and serine 274 each carry phosphoserine. Over residues 267–285 the composition is skewed to low complexity; that stretch reads SVRSAPSSAPSTPLSTDAP. Residues 267 to 332 form a disordered region; the sequence is SVRSAPSSAP…SDKPCRPKSE (66 aa). Threonine 278 carries the post-translational modification Phosphothreonine. Residues 322–332 show a composition bias toward basic and acidic residues; that stretch reads SSDKPCRPKSE.

The protein belongs to the PtdIns transfer protein family. PI transfer class IIB subfamily. As to expression, ubiquitously expressed.

Its subcellular location is the cytoplasm. The catalysed reaction is a 1,2-diacyl-sn-glycero-3-phospho-(1D-myo-inositol)(in) = a 1,2-diacyl-sn-glycero-3-phospho-(1D-myo-inositol)(out). It carries out the reaction a 1,2-diacyl-sn-glycero-3-phosphate(in) = a 1,2-diacyl-sn-glycero-3-phosphate(out). Functionally, catalyzes the transfer of phosphatidylinositol (PI) and phosphatidic acid (PA) between membranes. Binds PA derived from the phospholipase D signaling pathway and among the cellular PA species, preferably binds to the C16:0/16:1 and C16:1/18:1 PA species. Its function is as follows. Catalyzes the transfer of phosphatidylinositol between membranes. The chain is Cytoplasmic phosphatidylinositol transfer protein 1 (PITPNC1) from Homo sapiens (Human).